The chain runs to 375 residues: MFRLARAQTALANKASVSRSFLRLNSSFAIPETQKGVIFYENGGKLEYKDLPVPKPKANEILINVKYSGVCHTDLHAWKGDWPLPVKLPLVGGHEGAGIVVAKGENVKNFEIGDYAGIKWLNGSCMSCELCEQGYESNCLQADLSGYTHDGSFQQYATADAVQAAQIPKGTDLAEIAPILCAGVTVYKALKTADLKPGQWVAISGAAGGLGSLAVQYAKAMGLRVLGIDGGDGKEELFKQCGGEVFIDFRKSKDMVADIQEATNGGPHGVINVSVSEAAISMSTEYVRPTGVVVLVGLPADAYVKSEVFSHVVKSISIKGSYVGNRADTREATDFFTRGLVKSPIKIIGLSELPEAYELMEQGKILGRFVVDTYK.

The transit peptide at 1–27 (MFRLARAQTALANKASVSRSFLRLNSS) directs the protein to the mitochondrion. Zn(2+) is bound by residues Cys-71, His-94, Cys-125, Cys-128, Cys-131, Cys-139, and Cys-181. NAD(+)-binding positions include 205–211 (GAAGGLG), Asp-229, Lys-234, 296–298 (VGL), and Arg-368.

The protein belongs to the zinc-containing alcohol dehydrogenase family. As to quaternary structure, homotetramer. Requires Zn(2+) as cofactor.

Its subcellular location is the mitochondrion matrix. It catalyses the reaction a primary alcohol + NAD(+) = an aldehyde + NADH + H(+). The enzyme catalyses a secondary alcohol + NAD(+) = a ketone + NADH + H(+). In Kluyveromyces lactis (strain ATCC 8585 / CBS 2359 / DSM 70799 / NBRC 1267 / NRRL Y-1140 / WM37) (Yeast), this protein is Alcohol dehydrogenase 4, mitochondrial (ADH4).